A 264-amino-acid chain; its full sequence is Indolethylamine N-methyltransferase (264 aa).

Lys-14 carries the N6-succinyllysine modification. Residues Tyr-21, Tyr-26, 64–65 (GS), Tyr-70, Asp-86, and Asn-91 each bind S-adenosyl-L-methionine. Lys-97 bears the N6-succinyllysine mark. S-adenosyl-L-methionine contacts are provided by residues 143 to 144 (DV) and Phe-164.

It belongs to the class I-like SAM-binding methyltransferase superfamily. NNMT/PNMT/TEMT family. As to quaternary structure, monomer. Detected in lung and liver (at protein level).

The protein localises to the cytoplasm. The enzyme catalyses a tertiary amine + S-adenosyl-L-methionine = a methylated tertiary amine + S-adenosyl-L-homocysteine + H(+). The catalysed reaction is a secondary amine + S-adenosyl-L-methionine = a methylated secondary amine + S-adenosyl-L-homocysteine + H(+). It carries out the reaction a primary amine + S-adenosyl-L-methionine = a methylated primary amine + S-adenosyl-L-homocysteine + H(+). It catalyses the reaction dimethyl sulfide + S-adenosyl-L-methionine = trimethylsulfonium + S-adenosyl-L-homocysteine. With respect to regulation, inhibited by the S-adenosyl-L-methionine analog sinefungin and by the product S-adenosyl-L-homocysteine. Its function is as follows. Catalyzes the N-methylation of tryptamine and structurally related compounds. Functions as a thioether S-methyltransferase and is active with a variety of thioethers and the corresponding selenium and tellurium compounds, including 3-methylthiopropionaldehyde, dimethyl selenide, dimethyl telluride, 2-methylthioethylamine, 2-methylthioethanol, methyl-n-propyl sulfide and diethyl sulfide. Plays an important role in the detoxification of selenium compounds. The sequence is that of Indolethylamine N-methyltransferase (Inmt) from Mus musculus (Mouse).